A 225-amino-acid polypeptide reads, in one-letter code: Probable methylthioribulose-1-phosphate dehydratase (225 aa).

Cys-86 contributes to the substrate binding site. Residues His-104 and His-106 each contribute to the Zn(2+) site. Glu-127 serves as the catalytic Proton donor/acceptor. His-183 provides a ligand contact to Zn(2+).

Belongs to the aldolase class II family. MtnB subfamily. It depends on Zn(2+) as a cofactor.

It is found in the cytoplasm. The catalysed reaction is 5-(methylsulfanyl)-D-ribulose 1-phosphate = 5-methylsulfanyl-2,3-dioxopentyl phosphate + H2O. The protein operates within amino-acid biosynthesis; L-methionine biosynthesis via salvage pathway; L-methionine from S-methyl-5-thio-alpha-D-ribose 1-phosphate: step 2/6. Its function is as follows. Catalyzes the dehydration of methylthioribulose-1-phosphate (MTRu-1-P) into 2,3-diketo-5-methylthiopentyl-1-phosphate (DK-MTP-1-P). The polypeptide is Probable methylthioribulose-1-phosphate dehydratase (Leishmania braziliensis).